The sequence spans 597 residues: HECT-type ubiquitin ligase-interacting protein creD (597 aa).

Disordered stretches follow at residues 375 to 398 (EVDPSGYRTPGPGSGPGTPFGTLS), 439 to 492 (ASEH…MATP), and 576 to 597 (SRSHSHSDDERRIRLTQARGRA). Residues 452–466 (GPPSGSNTHGSNTHA) show a composition bias toward polar residues. Over residues 472-483 (LSRRASDEDVHD) the composition is skewed to basic and acidic residues.

This sequence belongs to the arrestin family. As to quaternary structure, interacts with hulA.

Its function is as follows. Component of the regulatory network controlling carbon source utilization through ubiquitination and deubiquitination involving creA, creB, creC, creD and acrB. May be involved in signaling by recognizing appropriately phosphorylated substrates via its arrestin domains and then recruit a HECT-type ubiquitin ligase such as hulA, leading to ubiquitination of the substrate, providing a link between ubiquitination and phosphorylation in protein regulation and stability. This chain is HECT-type ubiquitin ligase-interacting protein creD (creD), found in Emericella nidulans (strain FGSC A4 / ATCC 38163 / CBS 112.46 / NRRL 194 / M139) (Aspergillus nidulans).